The primary structure comprises 173 residues: MPRTQKNDNFVDKSFTVMADIILKILPTNKKAKEAFVYYRDGMSAQAEGEYAEALEYYEEALTLEEDTNDRGYILYNMGLIYASNGDHDKALELYHQAIELNPRLPQALNNIAVIYHYQGEKAKETGDHDGGEALFDQAADYWIRAIRMAPNNYIEAQNWLKTTGRMQIDVFF.

TPR repeat units lie at residues Ala-35–Thr-68, Gly-72–Leu-105, and Gly-120–Asn-153.

Belongs to the Ycf3 family.

It localises to the cellular thylakoid membrane. In terms of biological role, essential for the assembly of the photosystem I (PSI) complex. May act as a chaperone-like factor to guide the assembly of the PSI subunits. The polypeptide is Photosystem I assembly protein Ycf3 (Nostoc sp. (strain PCC 7120 / SAG 25.82 / UTEX 2576)).